The sequence spans 502 residues: Probable mitochondrial-processing peptidase subunit alpha (502 aa).

The protein belongs to the peptidase M16 family. As to quaternary structure, heterodimer of mas2 (alpha) and mas1 (beta) subunits, forming the mitochondrial processing protease (MPP) in which mas2 is involved in substrate recognition and binding and mas1 is the catalytic subunit.

The protein resides in the mitochondrion matrix. Substrate recognition and binding subunit of the essential mitochondrial processing protease (MPP), which cleaves the mitochondrial sequence off newly imported precursors proteins. In Schizosaccharomyces pombe (strain 972 / ATCC 24843) (Fission yeast), this protein is Probable mitochondrial-processing peptidase subunit alpha (mas2).